Here is a 379-residue protein sequence, read N- to C-terminus: L-lactate dehydrogenase (379 aa).

Positions 1 to 379 (MIISASTDYR…LSRDSLVKIP (379 aa)) constitute an FMN hydroxy acid dehydrogenase domain. A substrate-binding site is contributed by tyrosine 24. FMN is bound by residues serine 106 and glutamine 127. Tyrosine 129 contributes to the substrate binding site. Position 155 (threonine 155) interacts with FMN. Position 164 (arginine 164) interacts with substrate. Lysine 251 is an FMN binding site. Histidine 275 functions as the Proton acceptor in the catalytic mechanism. Residue arginine 278 participates in substrate binding. An FMN-binding site is contributed by 306–330 (DSGIRTGLDVVRMLALGADCTLLGR).

This sequence belongs to the FMN-dependent alpha-hydroxy acid dehydrogenase family. FMN serves as cofactor.

Its subcellular location is the cell inner membrane. The catalysed reaction is (S)-lactate + A = pyruvate + AH2. In terms of biological role, catalyzes the conversion of L-lactate to pyruvate. Is coupled to the respiratory chain. The chain is L-lactate dehydrogenase from Vibrio parahaemolyticus serotype O3:K6 (strain RIMD 2210633).